The following is a 169-amino-acid chain: Disulfide bond formation protein B (169 aa).

The Cytoplasmic portion of the chain corresponds to M1–F14. The chain crosses the membrane as a helical span at residues L15–Y31. Topologically, residues M32–Y49 are periplasmic. A disulfide bridge connects residues C41 and C44. The chain crosses the membrane as a helical span at residues A50 to M64. The Cytoplasmic segment spans residues N65–T71. A helical transmembrane segment spans residues V72 to G89. Topologically, residues R90 to Q144 are periplasmic. C102 and C130 are oxidised to a cystine. A helical transmembrane segment spans residues W145–R163. At N164–Y169 the chain is on the cytoplasmic side.

Belongs to the DsbB family.

It localises to the cell inner membrane. Required for disulfide bond formation in some periplasmic proteins. Acts by oxidizing the DsbA protein. In Pseudomonas syringae pv. tomato (strain ATCC BAA-871 / DC3000), this protein is Disulfide bond formation protein B.